We begin with the raw amino-acid sequence, 515 residues long: Probable cytochrome P450 6d4 (515 aa).

Cysteine 457 lines the heme pocket.

It belongs to the cytochrome P450 family. The cofactor is heme.

The protein localises to the endoplasmic reticulum membrane. The protein resides in the microsome membrane. Its function is as follows. May be involved in the metabolism of insect hormones and in the breakdown of synthetic insecticides. This chain is Probable cytochrome P450 6d4 (Cyp6d4), found in Drosophila melanogaster (Fruit fly).